The chain runs to 231 residues: Regulatory protein VanRc (231 aa).

Residues 4 to 117 (KIVVVDDEKE…EVVARVKTQL (114 aa)) enclose the Response regulatory domain. Asp53 bears the 4-aspartylphosphate mark. The ompR/PhoB-type DNA-binding region spans 132–231 (VEEYEKDGLI…VWGVGYIIEK (100 aa)).

Post-translationally, phosphorylated by VanSc.

Its subcellular location is the cytoplasm. In terms of biological role, member of the two-component regulatory system VanSc/VanRc. Binds to the promoter regions of target genes. Activates the transcription of vanC1 and vanXYC in response to vancomycin which results in vancomycin resistance. The chain is Regulatory protein VanRc from Enterococcus gallinarum.